Here is a 469-residue protein sequence, read N- to C-terminus: GTPase Der (469 aa).

EngA-type G domains are found at residues 3–166 (PVIA…PEDE) and 177–350 (LRLA…ESAN). Residues 9–16 (GRPNVGKS), 56–60 (DTGGI), 118–121 (NKVD), 183–190 (GRPNVGKS), 230–234 (DTAGV), and 295–298 (NKWD) each bind GTP. Positions 351–435 (LKVSPAKLTQ…PVKIEFKTSE (85 aa)) constitute a KH-like domain.

Belongs to the TRAFAC class TrmE-Era-EngA-EngB-Septin-like GTPase superfamily. EngA (Der) GTPase family. As to quaternary structure, associates with the 50S ribosomal subunit.

Functionally, GTPase that plays an essential role in the late steps of ribosome biogenesis. This Acinetobacter baumannii (strain AB0057) protein is GTPase Der.